The primary structure comprises 76 residues: MKFKLQDHMLVPKHEVLSKEEAEELLKILGIGKEQLPKIKADDPIAKEIGAKPGDIVKITRKSLTAGESVFYRLVV.

It belongs to the archaeal Rpo5/eukaryotic RPB5 RNA polymerase subunit family. As to quaternary structure, part of the RNA polymerase complex.

It is found in the cytoplasm. The catalysed reaction is RNA(n) + a ribonucleoside 5'-triphosphate = RNA(n+1) + diphosphate. DNA-dependent RNA polymerase (RNAP) catalyzes the transcription of DNA into RNA using the four ribonucleoside triphosphates as substrates. In Archaeoglobus fulgidus (strain ATCC 49558 / DSM 4304 / JCM 9628 / NBRC 100126 / VC-16), this protein is DNA-directed RNA polymerase subunit Rpo5.